Here is a 338-residue protein sequence, read N- to C-terminus: Galaxin (338 aa).

The N-terminal stretch at 1–23 (MKPSGAFLSLCVVLLSLATHCFS) is a signal peptide. Over residues 30-47 (RRDAHSDTNALKSRDRRQ) the composition is skewed to basic and acidic residues. Positions 30–50 (RRDAHSDTNALKSRDRRQAPA) are disordered.

As to expression, component of the acid-insoluble organic matrix of the aragonitic skeleton (at protein level). Initially, expressed in an aboral submarginal ring and then along calcifying septa.

It localises to the secreted. The sequence is that of Galaxin from Acropora millepora (Staghorn coral).